A 355-amino-acid chain; its full sequence is (R,S)-reticuline 7-O-methyltransferase (355 aa).

Residues 197–200 (VGGG), Asp-221, 221–222 (DL), 241–242 (DM), and Lys-255 contribute to the S-adenosyl-L-methionine site. His-259 functions as the Proton acceptor in the catalytic mechanism.

Belongs to the class I-like SAM-binding methyltransferase superfamily. Cation-independent O-methyltransferase family. Homodimer. In terms of tissue distribution, expressed in capsules, buds and stems, and at lower levels in leaves. Localized to parenchyma cells within the vascular bundle, but only to those cells distal to laticifers. In roots, found in the pericycle within the stele.

The enzyme catalyses (S)-reticuline + S-adenosyl-L-methionine = (S)-laudanine + S-adenosyl-L-homocysteine + H(+). The catalysed reaction is (R)-reticuline + S-adenosyl-L-methionine = (R)-laudanine + S-adenosyl-L-homocysteine + H(+). Functionally, catalyzes the transfer of a methyl group to reticuline to form laudanine. Methylates the simple catechols guaiacol and isovanillic acid as well as the tetrahydrobenzylisoquinolines (R)-reticuline, (S)-reticuline, (R,S)-orientaline, (R)-protosinomenine and (R,S)-isoorientaline. Involved in the production of laudanine. This chain is (R,S)-reticuline 7-O-methyltransferase, found in Papaver somniferum (Opium poppy).